Consider the following 299-residue polypeptide: Glycine--tRNA ligase alpha subunit (299 aa).

Belongs to the class-II aminoacyl-tRNA synthetase family. Tetramer of two alpha and two beta subunits.

Its subcellular location is the cytoplasm. The enzyme catalyses tRNA(Gly) + glycine + ATP = glycyl-tRNA(Gly) + AMP + diphosphate. This Lactiplantibacillus plantarum (strain ATCC BAA-793 / NCIMB 8826 / WCFS1) (Lactobacillus plantarum) protein is Glycine--tRNA ligase alpha subunit.